A 246-amino-acid polypeptide reads, in one-letter code: tRNA pseudouridine synthase A (246 aa).

D52 (nucleophile) is an active-site residue. Substrate is bound at residue Y111.

Belongs to the tRNA pseudouridine synthase TruA family. In terms of assembly, homodimer.

It catalyses the reaction uridine(38/39/40) in tRNA = pseudouridine(38/39/40) in tRNA. Functionally, formation of pseudouridine at positions 38, 39 and 40 in the anticodon stem and loop of transfer RNAs. This chain is tRNA pseudouridine synthase A, found in Ehrlichia ruminantium (strain Welgevonden).